Reading from the N-terminus, the 221-residue chain is Urease accessory protein UreF (221 aa).

Belongs to the UreF family. In terms of assembly, ureD, UreF and UreG form a complex that acts as a GTP-hydrolysis-dependent molecular chaperone, activating the urease apoprotein by helping to assemble the nickel containing metallocenter of UreC. The UreE protein probably delivers the nickel.

The protein localises to the cytoplasm. Its function is as follows. Required for maturation of urease via the functional incorporation of the urease nickel metallocenter. The protein is Urease accessory protein UreF of Aliivibrio fischeri (strain MJ11) (Vibrio fischeri).